Consider the following 250-residue polypeptide: 5-oxoprolinase subunit A (250 aa).

The protein belongs to the LamB/PxpA family. As to quaternary structure, forms a complex composed of PxpA, PxpB and PxpC.

It catalyses the reaction 5-oxo-L-proline + ATP + 2 H2O = L-glutamate + ADP + phosphate + H(+). Catalyzes the cleavage of 5-oxoproline to form L-glutamate coupled to the hydrolysis of ATP to ADP and inorganic phosphate. The polypeptide is 5-oxoprolinase subunit A (Staphylococcus aureus (strain MRSA252)).